The primary structure comprises 118 residues: Histone H4 (118 aa).

A disordered region spans residues 1–39 (MATDTGSGRGKGGKGVTLGKGSKGAKASKGGKRIRTKTQ). The span at 7–22 (SGRGKGGKGVTLGKGS) shows a compositional bias: gly residues.

The protein belongs to the histone H4 family. The nucleosome is a histone octamer containing two molecules each of H2A, H2B, H3 and H4 assembled in one H3-H4 heterotetramer and two H2A-H2B heterodimers. The octamer wraps approximately 147 bp of DNA.

It localises to the nucleus. It is found in the chromosome. Its function is as follows. Core component of nucleosome. Nucleosomes wrap and compact DNA into chromatin, limiting DNA accessibility to the cellular machineries which require DNA as a template. Histones thereby play a central role in transcription regulation, DNA repair, DNA replication and chromosomal stability. DNA accessibility is regulated via a complex set of post-translational modifications of histones, also called histone code, and nucleosome remodeling. In Entamoeba histolytica (strain ATCC 30459 / HM-1:IMSS / ABRM), this protein is Histone H4.